The chain runs to 247 residues: ATP synthase subunit a, chloroplastic (247 aa).

The next 5 helical transmembrane spans lie at 38 to 58 (QVLITSWVVIAILLGSATIAV), 95 to 115 (VPFIGTMFLFIFVSNWSGALL), 134 to 154 (INTTVALALLTSVAYFYAGLT), 199 to 219 (LVVVVLVSLVPLVVPIPVMLL), and 220 to 240 (GLFTSGIQALIFATLAAAYIG).

Belongs to the ATPase A chain family. F-type ATPases have 2 components, CF(1) - the catalytic core - and CF(0) - the membrane proton channel. CF(1) has five subunits: alpha(3), beta(3), gamma(1), delta(1), epsilon(1). CF(0) has four main subunits: a, b, b' and c.

It is found in the plastid. The protein localises to the chloroplast thylakoid membrane. Key component of the proton channel; it plays a direct role in the translocation of protons across the membrane. This Nicotiana sylvestris (Wood tobacco) protein is ATP synthase subunit a, chloroplastic.